Reading from the N-terminus, the 311-residue chain is Metal-staphylopine import system permease protein CntB (311 aa).

The next 6 helical transmembrane spans lie at 9–29, 105–125, 139–159, 173–193, 237–257, and 274–294; these read IALM…LTYI, LTII…VVSA, VAFF…IIYV, GPES…GIYF, IFCM…YIFA, and FPVI…FNTL. One can recognise an ABC transmembrane type-1 domain in the interval 99–295; it reads FMNTLKLTII…VLFIVFNTLA (197 aa).

Belongs to the binding-protein-dependent transport system permease family. The complex is composed of two ATP-binding proteins (CntD and CntF), two transmembrane proteins (CntB and CntC) and a solute-binding protein (CntA).

The protein localises to the cell membrane. Nickel/cobalt import is reduced in the presence of zinc. Functionally, part of the ABC transporter complex CntABCDF (Opp1) involved in the uptake of metal in complex with the metallophore staphylopine (StP). Involved in the import of divalent metals ions such as nickel, cobalt and zinc. Probably responsible for the translocation of the substrate across the membrane. Plays a major role in nickel/cobalt import in zinc-depleted conditions. Contributes to virulence. Required for full urease activity in vitro. The sequence is that of Metal-staphylopine import system permease protein CntB from Staphylococcus aureus (strain NCTC 8325 / PS 47).